Consider the following 146-residue polypeptide: 3-dehydroquinate dehydratase (146 aa).

Tyr23 functions as the Proton acceptor in the catalytic mechanism. The substrate site is built by Asn79, His85, and Asp92. Residue His105 is the Proton donor of the active site. Substrate is bound by residues 106–107 (IS) and Arg116.

It belongs to the type-II 3-dehydroquinase family. In terms of assembly, homododecamer.

It carries out the reaction 3-dehydroquinate = 3-dehydroshikimate + H2O. It participates in metabolic intermediate biosynthesis; chorismate biosynthesis; chorismate from D-erythrose 4-phosphate and phosphoenolpyruvate: step 3/7. Catalyzes a trans-dehydration via an enolate intermediate. This is 3-dehydroquinate dehydratase from Variovorax paradoxus (strain S110).